The chain runs to 424 residues: Serine--tRNA ligase (424 aa).

T233–E235 is an L-serine binding site. R264–E266 lines the ATP pocket. E287 serves as a coordination point for L-serine. Residue E351–S354 participates in ATP binding. Residue S386 participates in L-serine binding.

This sequence belongs to the class-II aminoacyl-tRNA synthetase family. Type-1 seryl-tRNA synthetase subfamily. In terms of assembly, homodimer. The tRNA molecule binds across the dimer.

Its subcellular location is the cytoplasm. It carries out the reaction tRNA(Ser) + L-serine + ATP = L-seryl-tRNA(Ser) + AMP + diphosphate + H(+). The catalysed reaction is tRNA(Sec) + L-serine + ATP = L-seryl-tRNA(Sec) + AMP + diphosphate + H(+). It participates in aminoacyl-tRNA biosynthesis; selenocysteinyl-tRNA(Sec) biosynthesis; L-seryl-tRNA(Sec) from L-serine and tRNA(Sec): step 1/1. Functionally, catalyzes the attachment of serine to tRNA(Ser). Is also able to aminoacylate tRNA(Sec) with serine, to form the misacylated tRNA L-seryl-tRNA(Sec), which will be further converted into selenocysteinyl-tRNA(Sec). This Pseudothermotoga lettingae (strain ATCC BAA-301 / DSM 14385 / NBRC 107922 / TMO) (Thermotoga lettingae) protein is Serine--tRNA ligase.